We begin with the raw amino-acid sequence, 484 residues long: Signal transduction histidine-protein kinase/phosphatase MprB (484 aa).

The span at 1 to 10 (MAADNAGRWP) shows a compositional bias: low complexity. The tract at residues 1 to 23 (MAADNAGRWPGQPPGPPAPTHPA) is disordered. Topologically, residues 1-31 (MAADNAGRWPGQPPGPPAPTHPASSVSLRWR) are cytoplasmic. Residues 11–20 (GQPPGPPAPT) are compositionally biased toward pro residues. The chain crosses the membrane as a helical span at residues 32-52 (VMLLAMSMVVISVVLMAVAVF). The Extracellular portion of the chain corresponds to 53 to 172 (AVTSRALYDD…TGKVLKRLGT (120 aa)). A helical transmembrane segment spans residues 173–193 (VLLIVGGLGVAVAAIAGGMVA). The 53-residue stretch at 194 to 246 (SAGLRPVGRLTQAAERVARTDDLRPIPVIGNDELARLTETFNMMLRALAESRE) folds into the HAMP domain. The Cytoplasmic segment spans residues 194-484 (SAGLRPVGRL…SPAGSDEAER (291 aa)). The 221-residue stretch at 254–474 (DAGHELRTPL…AMHVVLPGRP (221 aa)) folds into the Histidine kinase domain. Histidine 257 is subject to Phosphohistidine; by autocatalysis.

Mg(2+) serves as cofactor. It depends on Mn(2+) as a cofactor. Autophosphorylated.

The protein resides in the cell membrane. The enzyme catalyses ATP + protein L-histidine = ADP + protein N-phospho-L-histidine.. In terms of biological role, member of the two-component regulatory system MprB/MprA which contributes to maintaining a balance among several systems involved in stress resistance and is required for establishment and maintenance of persistent infection in the host. In response to environmental signals MprB acts both as a membrane-associated protein kinase that undergoes autophosphorylation and subsequently transfers the phosphate to MprA, and a protein phosphatase that dephosphorylates phospho-MprA. The polypeptide is Signal transduction histidine-protein kinase/phosphatase MprB (mprB) (Mycolicibacterium vanbaalenii (strain DSM 7251 / JCM 13017 / BCRC 16820 / KCTC 9966 / NRRL B-24157 / PYR-1) (Mycobacterium vanbaalenii)).